The chain runs to 276 residues: Protein SCO1 homolog 2, mitochondrial (276 aa).

The transit peptide at 1–14 (MLPCRRLVLSCKNQ) directs the protein to the mitochondrion. Residues 66–82 (YAVPAILLGFAGFVGFL) traverse the membrane as a helical segment. Positions 110 to 273 (VKGPIIGGPF…SQELLKEVAS (164 aa)) constitute a Thioredoxin domain.

It belongs to the SCO1/2 family. In terms of tissue distribution, expressed in the whole plant with highest expression in imbibed seeds and embryos, and the root hair zone.

The protein localises to the mitochondrion inner membrane. Thought to play a role in cellular copper homeostasis, mitochondrial redox signaling or insertion of copper into the active site of COX. Participates in copper and redox homeostasis. The sequence is that of Protein SCO1 homolog 2, mitochondrial (HCC2) from Arabidopsis thaliana (Mouse-ear cress).